The chain runs to 1262 residues: Ras-specific guanine nucleotide-releasing factor 1 (1262 aa).

Residues 22–130 (DGTRKGYLSK…WVAAIARASY (109 aa)) enclose the PH 1 domain. Phosphoserine; by PLK2 is present on Ser71. Residues 208 to 233 (KKIKKVQSFLRGWLCRRKWKNIIQDY) enclose the IQ domain. The DH domain maps to 244–430 (KRNQVVFSML…EELSRIMHDE (187 aa)). Positions 460–588 (TFVRQGSLMQ…WTSDIIQCVD (129 aa)) constitute a PH 2 domain. Phosphoserine; by PLK2 occurs at positions 581 and 617. An N-terminal Ras-GEF domain is found at 635–749 (KVLQIRYASV…RRRKLSLNIP (115 aa)). A disordered region spans residues 714–738 (DAPKSPRASRKFSSPPPLAIGTSSP). Phosphoserine is present on Ser745. Position 766 is a phosphoserine; by PLK2 (Ser766). The segment at 800 to 854 (EEIDVPATIPEKPGELSASRKHSSDVLKEESEDDQNHSDEDNTEVSPVKSPPTPK) is disordered. The segment covering 821 to 839 (HSSDVLKEESEDDQNHSDE) has biased composition (basic and acidic residues). Residues 1027-1259 (PALEIAEQLT…YESSLLIEPK (233 aa)) form the Ras-GEF domain.

In terms of assembly, homooligomer and heterooligomer with RASGRF2. Interacts with USP8, thereby regulating its stability. Post-translationally, phosphorylated by PLK2, leading to ubiquitination and degradation by the proteasome. In terms of processing, ubiquitinated and degraded following phosphorylation by PLK2. Phosphorylated by SRC and LCK. Phosphorylation by LCK increases its capacity to stimulate the GDP/GTP exchange on Ras, whereas its phosphorylation by SRC seems not to have an effect on stimulation activity. Brain.

Promotes the exchange of Ras-bound GDP by GTP. The protein is Ras-specific guanine nucleotide-releasing factor 1 (Rasgrf1) of Mus musculus (Mouse).